Reading from the N-terminus, the 485-residue chain is Adenosylhomocysteinase (485 aa).

The substrate site is built by Thr60, Asp146, and Glu208. 209–211 (TTT) contacts NAD(+). Substrate is bound by residues Lys238 and Asp242. Residues Asn243, 272–277 (GYGDVG), Glu295, Asn330, 351–353 (IGH), and Asn399 contribute to the NAD(+) site.

It belongs to the adenosylhomocysteinase family. Requires NAD(+) as cofactor.

It is found in the cytoplasm. It catalyses the reaction S-adenosyl-L-homocysteine + H2O = L-homocysteine + adenosine. The protein operates within amino-acid biosynthesis; L-homocysteine biosynthesis; L-homocysteine from S-adenosyl-L-homocysteine: step 1/1. Its function is as follows. May play a key role in the regulation of the intracellular concentration of adenosylhomocysteine. The protein is Adenosylhomocysteinase of Streptomyces griseus subsp. griseus (strain JCM 4626 / CBS 651.72 / NBRC 13350 / KCC S-0626 / ISP 5235).